The primary structure comprises 241 residues: Demethylmenaquinone methyltransferase (241 aa).

S-adenosyl-L-methionine contacts are provided by residues Thr-60, Asp-81, and 106–107 (DA).

It belongs to the class I-like SAM-binding methyltransferase superfamily. MenG/UbiE family.

The enzyme catalyses a 2-demethylmenaquinol + S-adenosyl-L-methionine = a menaquinol + S-adenosyl-L-homocysteine + H(+). The protein operates within quinol/quinone metabolism; menaquinone biosynthesis; menaquinol from 1,4-dihydroxy-2-naphthoate: step 2/2. In terms of biological role, methyltransferase required for the conversion of demethylmenaquinol (DMKH2) to menaquinol (MKH2). The protein is Demethylmenaquinone methyltransferase of Staphylococcus aureus (strain MRSA252).